Reading from the N-terminus, the 364-residue chain is MALALLEDWCRIMSVDEQKSLMVTGIPADYEEAEIQEVLQETLKSLGRYRLLGKIFRKQENANAVLLELLEDTDISAIPSEVQGKGGVWKVIFKTPNQDTEFLERLNLFLEKEGQTVSGMFRALGHEGVSSATVPCISPELLAHLLGQAMAHAPQPLLPMRYRKLRVFSGSAVPAPEEEPFEVWLEQATEIVKEWPVTEAEKKRWLAESLRGPALDLMHIVQADNPSISVEECLEAFKQVFGSLESRRAAQVRYLKTYQEEGEKVSAYVLRLETLLRRAVEKRAIPRRIADQVRLEQVMAGATLNQMLWCRLRELKDQGPPPSFLELMKVIREEEEEEASFENESIEEPEEGDGYGRWNHEGDD.

An N-acetylalanine modification is found at Ala-2. A compositionally biased stretch (acidic residues) spans 335–353 (EEEEASFENESIEEPEEGD). The tract at residues 335–364 (EEEEASFENESIEEPEEGDGYGRWNHEGDD) is disordered.

The protein belongs to the PNMA family.

Its subcellular location is the nucleus. It is found in the nucleolus. This is Paraneoplastic antigen Ma2 homolog (PNMA2) from Pongo abelii (Sumatran orangutan).